The sequence spans 399 residues: 26S proteasome regulatory subunit S10B homolog B (399 aa).

Position 180–187 (Gly-180–Thr-187) interacts with ATP. A Glycyl lysine isopeptide (Lys-Gly) (interchain with G-Cter in ubiquitin) cross-link involves residue Lys-203.

It belongs to the AAA ATPase family. Component of the 19S regulatory particle (RP/PA700) base subcomplex of the 26S proteasome. The 26S proteasome is composed of a core protease (CP), known as the 20S proteasome, capped at one or both ends by the 19S regulatory particle (RP/PA700). The RP/PA700 complex is composed of at least 17 different subunits in two subcomplexes, the base and the lid, which form the portions proximal and distal to the 20S proteolytic core, respectively.

It localises to the cytoplasm. The protein localises to the nucleus. Functionally, the 26S proteasome is involved in the ATP-dependent degradation of ubiquitinated proteins. The regulatory (or ATPase) complex confers ATP dependency and substrate specificity to the 26S complex. The chain is 26S proteasome regulatory subunit S10B homolog B (RPT4B) from Arabidopsis thaliana (Mouse-ear cress).